Consider the following 188-residue polypeptide: HGPRTase-like protein 1 (188 aa).

The protein belongs to the purine/pyrimidine phosphoribosyltransferase family. Archaeal HPRT subfamily.

May catalyze a purine salvage reaction, the substrate is unknown. This Haloquadratum walsbyi (strain DSM 16854 / JCM 12705 / C23) protein is HGPRTase-like protein 1.